A 214-amino-acid polypeptide reads, in one-letter code: Putative F-box protein At5g15670 (214 aa).

The F-box domain maps to Arg22–Tyr68.

The polypeptide is Putative F-box protein At5g15670 (Arabidopsis thaliana (Mouse-ear cress)).